A 1098-amino-acid chain; its full sequence is Gramicidin S synthase 1 (1098 aa).

One can recognise a Carrier domain in the interval 538 to 612 (APRNEIEETL…QLVHYIKDSK (75 aa)). Ser-573 is modified (O-(pantetheine 4'-phosphoryl)serine).

Belongs to the ATP-dependent AMP-binding enzyme family. In terms of assembly, large multienzyme complex of GrsA and GrsB. Pantetheine 4'-phosphate serves as cofactor.

It catalyses the reaction L-phenylalanine + ATP + H2O = D-phenylalanine + AMP + diphosphate + H(+). The protein operates within antibiotic biosynthesis; gramicidin S biosynthesis. Its function is as follows. In the first step of peptide synthesis this enzyme activates phenylalanine and racemizes it to the D-isomer. This chain is Gramicidin S synthase 1 (grsA), found in Brevibacillus brevis (Bacillus brevis).